We begin with the raw amino-acid sequence, 1393 residues long: MNELMKIFGQVSGTQAFDQIKISIASPEKIRSWSFGEIKKPETINYRTFKPERDGLFCARIFGPIKDYECLCGKYKRMKYRGIICEKCGVEVTLSKVRRERMGHIELAAPVAHIWFMKSLPSRVGLLIDMTLKDLERVLYFENYVVVEPGLTPLKLHEMLSEEQYQRAVEEYGEDSFTAGIGAEAIRDMLMSIDLETLKTDMKVELRDTTSEAKRKKLVKRLKIVDAFIESGCRPEWMILEVIPVIPPELRPLVPLDGGRFATSDLNDLYRRVINRNNRLKRLIELRAPDIIIRNEKRMLQESVDALFDNGRRGRAITGANKRPLKSLSDMLKGKQGRFRQNLLGKRVDYSGRSVIVVGPELKLHQCGLPKKMALELFKPFVYSKLEQYHYATTIKAAKRMVEKERPEVWDILEEVIREHPVMLNRAPTLHRLGIQAFEPVLIEGKAIQLHPLVCTAFNADFDGDQMAVHVPLSLEAQLEARVLMMSTNNILSPANGKPIIVPTQDIVLGLYYLTLDREGEKGEGMAFASLNEIEHALQARVVSLQARVKARLHTIDENGAPVIRTVETTPGRMLLSRLLPRHTALPFSVINRLLRKKDITDVIDTVYRHCGQKETVIFCDRVMQLGYAHAARAGISFGKDDLVIPPTKAQLVADTDAEVKEFEQQYQDGLITQGEKYNKVVDAWSHCTERVADEMMKEIAKIEPGKPVNSVYMMAHSGARGSAAQMKQLAGMRGLMAKPSGEIIETPIVSNFKEGLTVLEYFNSTHGARKGLADTALKTANSGYLTRRLVDVAQDAIIVIEDCGTSRGITAMPVVEGGQIIASLGERVLGRTAAEDIKDTDGTIIVPLGKMIEEHDVELLEEAGIEQVRIRSVLTCEAETGICGKCYGRDLARGTKVNIGEAVGVIAAQSIGEPGTQLTMRTFHIGGAAQRGAEQSSVEAAFDGKIVMENRAVVGTSENVLIVMSRNCEVKITDEAGREKARYRIPYGSKLLTDEGRMVTKGDRLAEWDPYTVPIITEREGIAIYNDLVEGVSVREVTDEATGISSKVVVEWKNMPKGTDLKPRITLRDDRGEGITLANGLEARYFMSVDTILSVENGQRVKAGDVLGRIPREGSKTRDITGGLPRVAELFEARKPKDHAIISEIDGRVEFGKDYKSKRRLLVVPEDGDPVEYLLPKGKHLTIQEGDYVRKGDPLMDGNPVPHDILRVMGVEALANYLIKEIQDVYRLQGVKINDKHIEVISRQMLQKVEITEPGDTTFLVGELIDRTDFQIENEKTLKENGRPANSIPVLQGITKASLQTHSFISAASFQETTRVLTEAAVSGKSDSLMGLKENVIVGRLIPAGTGAMMNRLRALAATRDKEIEDSRGAEMVPVLGAAESFTPRLPEPPAE.

Residues cysteine 70, cysteine 72, cysteine 85, and cysteine 88 each contribute to the Zn(2+) site. Residues aspartate 461, aspartate 463, and aspartate 465 each contribute to the Mg(2+) site. The Zn(2+) site is built by cysteine 804, cysteine 877, cysteine 884, and cysteine 887.

The protein belongs to the RNA polymerase beta' chain family. In terms of assembly, the RNAP catalytic core consists of 2 alpha, 1 beta, 1 beta' and 1 omega subunit. When a sigma factor is associated with the core the holoenzyme is formed, which can initiate transcription. Mg(2+) serves as cofactor. The cofactor is Zn(2+).

It catalyses the reaction RNA(n) + a ribonucleoside 5'-triphosphate = RNA(n+1) + diphosphate. Functionally, DNA-dependent RNA polymerase catalyzes the transcription of DNA into RNA using the four ribonucleoside triphosphates as substrates. In Rhodospirillum rubrum (strain ATCC 11170 / ATH 1.1.1 / DSM 467 / LMG 4362 / NCIMB 8255 / S1), this protein is DNA-directed RNA polymerase subunit beta'.